We begin with the raw amino-acid sequence, 633 residues long: Beta-myrcene synthase TPS15CT (633 aa).

The N-terminal 55 residues, Met-1–Gln-55, are a transit peptide targeting the chloroplast. (2E)-geranyl diphosphate is bound by residues Arg-344, Asp-381, Asp-385, Arg-525, and Asp-528. Mg(2+) is bound by residues Asp-381 and Asp-385. The DDXXD motif signature appears at Asp-381–Asp-385. Mg(2+)-binding residues include Asp-528, Thr-532, and Glu-536.

It belongs to the terpene synthase family. Tpsb subfamily. Mg(2+) serves as cofactor. The cofactor is Mn(2+).

Its subcellular location is the plastid. It is found in the chloroplast. The catalysed reaction is (2E)-geranyl diphosphate = beta-myrcene + diphosphate. It functions in the pathway secondary metabolite biosynthesis; terpenoid biosynthesis. Functionally, involved in monoterpene (C10) olefins biosynthesis, constituants of cannabinoids and terpenoids-rich resins. Catalyzes strictly the conversion of (2E)-geranyl diphosphate to beta-myrcene. The protein is Beta-myrcene synthase TPS15CT of Cannabis sativa (Hemp).